The primary structure comprises 441 residues: MSQRSSELISDSWKGSSSEELFERAKIVSPGGVHSPVRSFRSVGGTPVFFVSANGATLTDVSGKEYVDFCLSFGPLILGHRDPEVEEVVRETAGLAWSFGTAEPYSLELAEFITNRIPWAEKVRFVNSGTEAVMSALRVTRAATGREKIFKFDGCYHGHLDALLVKAGSGLAGESSSDSAGISSTAIANTLVLPLDDEMAVQKLFESEGKNIAALIIEPLPANYGLLVQRKEFLLKIVEIAKKYGTLVVFDEVISGFRTGFQGMSGLLGIRPDLVTYGKIIGGGFPVGCYAGRRDLLDLVAPSGPVYQAGTLSANPFGMRAGLATLKKAERDSIYSVLEVRTKTFADEMVKLLNGKTDQEWEAVTHSSLFWFRKKTQQAVRRIDQIPEGHKEGFAEVFHVLLKNGIYLAPSGYEVGFLSWAHNDSVIAKVLEIADKAFKEL.

At lysine 279 the chain carries N6-(pyridoxal phosphate)lysine.

Belongs to the class-III pyridoxal-phosphate-dependent aminotransferase family. HemL subfamily. In terms of assembly, homodimer. The cofactor is pyridoxal 5'-phosphate.

It is found in the cytoplasm. It catalyses the reaction (S)-4-amino-5-oxopentanoate = 5-aminolevulinate. It participates in porphyrin-containing compound metabolism; protoporphyrin-IX biosynthesis; 5-aminolevulinate from L-glutamyl-tRNA(Glu): step 2/2. This Leptospira borgpetersenii serovar Hardjo-bovis (strain JB197) protein is Glutamate-1-semialdehyde 2,1-aminomutase.